Reading from the N-terminus, the 213-residue chain is High frequency lysogenization protein HflD homolog (213 aa).

Positions 79-126 form a coiled coil; the sequence is QGLNAELTRYTLSLMVLERKLSSAKGALDTLGNRINGLQRQLEHFDLQ.

This sequence belongs to the HflD family.

It localises to the cytoplasm. The protein resides in the cell inner membrane. The chain is High frequency lysogenization protein HflD homolog from Shigella flexneri serotype 5b (strain 8401).